The following is a 444-amino-acid chain: N-succinylarginine dihydrolase (444 aa).

Substrate-binding positions include 19–28 (AGLSFGNVAS), Asn110, and 137–138 (HR). Glu174 is a catalytic residue. A substrate-binding site is contributed by Arg214. His250 is an active-site residue. Residues Asp252 and Asn362 each contribute to the substrate site. The active-site Nucleophile is Cys368.

The protein belongs to the succinylarginine dihydrolase family. As to quaternary structure, homodimer.

The catalysed reaction is N(2)-succinyl-L-arginine + 2 H2O + 2 H(+) = N(2)-succinyl-L-ornithine + 2 NH4(+) + CO2. It participates in amino-acid degradation; L-arginine degradation via AST pathway; L-glutamate and succinate from L-arginine: step 2/5. Catalyzes the hydrolysis of N(2)-succinylarginine into N(2)-succinylornithine, ammonia and CO(2). The sequence is that of N-succinylarginine dihydrolase from Shewanella frigidimarina (strain NCIMB 400).